We begin with the raw amino-acid sequence, 281 residues long: DegV domain-containing protein YqaC (281 aa).

The DegV domain occupies 3-279; sequence LAVITDSSAD…LNTVAYGISP (277 aa). The hexadecanoate site is built by Thr-60 and Ser-93.

Its function is as follows. May bind long-chain fatty acids, such as palmitate, and may play a role in lipid transport or fatty acid metabolism. This Lactococcus lactis subsp. lactis (strain IL1403) (Streptococcus lactis) protein is DegV domain-containing protein YqaC (yqaC).